A 592-amino-acid chain; its full sequence is MEATAAPFSSIVSSRQNFSSSSSIRASSPASLFLSQKSIGNVNRKFKSPRSLSVRASSTSDSVVTLLDYGAGNVRSIRNALRHLGFSIKDVQTPGDILNADRLIFPGVGAFAPAMDVLNRTGMAEALCKYIENDRPFLGICLGLQLLFDSSEENGPVKGLGVIPGIVGRFDASAGIRVPHIGWNALQVGKDSEILDDVGNRHVYFVHSYRAIPSDENKDWISSTCNYGESFISSIRRGNVHAVQFHPEKSGEVGLSVLRRFLHPKLPATQKPMEGKASKLAKRVIACLDVRTNDKGDLVVTKGDQYDVREQSNENEVRNLGKPVDLAGQYYKDGADEISFLNITGFRDFPLGDLPMIQVLRQTSKNVFVPLTVGGGIRDFTDASGRYYSSLEVAAEYFRSGADKISIGSDAVSAAEEFIKSGVKTGKSSLEQISRVYGNQAVVVSIDPRRVYVNHPDDVPYKVIRVTNPGPNGEEYAWYQCTVSGGREGRPIGAFELAKAVEELGAGEILLNCIDCDGQGKGFDIDLVKLISDSVGIPVIASSGAGTPDHFSEVFEKTNASAALAAGIFHRKEVPIQSVKEHLQEERIEVRI.

A chloroplast-targeting transit peptide spans 1 to 55; the sequence is MEATAAPFSSIVSSRQNFSSSSSIRASSPASLFLSQKSIGNVNRKFKSPRSLSVR. The 209-residue stretch at 63–271 folds into the Glutamine amidotransferase type-1 domain; it reads VVTLLDYGAG…LHPKLPATQK (209 aa). Residues cysteine 141, histidine 246, and glutamate 248 each act as for GATase activity in the active site. The interval 280–592 is cyclase; it reads LAKRVIACLD…LQEERIEVRI (313 aa). Active-site residues include aspartate 289 and aspartate 447.

This sequence in the C-terminal section; belongs to the HisA/HisF family.

It is found in the plastid. Its subcellular location is the chloroplast. It catalyses the reaction 5-[(5-phospho-1-deoxy-D-ribulos-1-ylimino)methylamino]-1-(5-phospho-beta-D-ribosyl)imidazole-4-carboxamide + L-glutamine = D-erythro-1-(imidazol-4-yl)glycerol 3-phosphate + 5-amino-1-(5-phospho-beta-D-ribosyl)imidazole-4-carboxamide + L-glutamate + H(+). The catalysed reaction is L-glutamine + H2O = L-glutamate + NH4(+). It functions in the pathway amino-acid biosynthesis; L-histidine biosynthesis; L-histidine from 5-phospho-alpha-D-ribose 1-diphosphate: step 5/9. In terms of biological role, IGPS catalyzes the conversion of PRFAR and glutamine to IGP, AICAR and glutamate. The glutaminase domain produces the ammonia necessary for the cyclase domain to produce IGP and AICAR from PRFAR. The ammonia is channeled to the active site of the cyclase domain. In Arabidopsis thaliana (Mouse-ear cress), this protein is Imidazole glycerol phosphate synthase hisHF, chloroplastic (HISN4).